Reading from the N-terminus, the 129-residue chain is Large ribosomal subunit protein bL20 (129 aa).

Belongs to the bacterial ribosomal protein bL20 family.

Binds directly to 23S ribosomal RNA and is necessary for the in vitro assembly process of the 50S ribosomal subunit. It is not involved in the protein synthesizing functions of that subunit. The sequence is that of Large ribosomal subunit protein bL20 from Mycobacterium tuberculosis (strain ATCC 25177 / H37Ra).